The chain runs to 413 residues: Bestrophin homolog 13 (413 aa).

Helical transmembrane passes span leucine 29–isoleucine 49, serine 72–alanine 92, leucine 236–glycine 256, and leucine 272–glycine 292.

The protein belongs to the anion channel-forming bestrophin (TC 1.A.46) family. Calcium-sensitive chloride channel subfamily. In terms of assembly, forms oligomers.

The protein resides in the cell membrane. Functionally, forms chloride channels. In Caenorhabditis elegans, this protein is Bestrophin homolog 13 (best-13).